The primary structure comprises 245 residues: Phosducin (245 aa).

Over residues 1 to 14 the composition is skewed to acidic residues; that stretch reads MEEAKSQSLEEDFE. The interval 1–68 is disordered; sequence MEEAKSQSLE…RDNKDSKERF (68 aa). Residues 1–241 enclose the Phosducin domain; it reads MEEAKSQSLE…THALDQTNME (241 aa). Positions 59 to 68 are enriched in basic and acidic residues; sequence RDNKDSKERF. Residue S73 is modified to Phosphoserine; by PKA. The segment at 111-245 is thioredoxin fold; it reads YGFVYELETG…DQTNMEEDIE (135 aa).

Belongs to the phosducin family. Interacts with CRX. Forms a complex with the beta and gamma subunits of the GTP-binding protein, transducin. Light-induced changes in cyclic nucleotide levels modulate the phosphorylation of this protein by cAMP kinase.

Its subcellular location is the cytoplasm. It is found in the cytosol. It localises to the nucleus. The protein localises to the cell projection. The protein resides in the cilium. Its subcellular location is the photoreceptor outer segment. It is found in the photoreceptor inner segment. Inhibits the transcriptional activation activity of the cone-rod homeobox CRX. May participate in the regulation of visual phototransduction or in the integration of photoreceptor metabolism. The polypeptide is Phosducin (PDC) (Felis catus (Cat)).